A 412-amino-acid chain; its full sequence is Glutamate dehydrogenase (412 aa).

Lys102 is an active-site residue.

This sequence belongs to the Glu/Leu/Phe/Val dehydrogenases family. In roots, stems, leaves and flowers but not in fruits.

The protein resides in the mitochondrion matrix. The enzyme catalyses L-glutamate + NAD(+) + H2O = 2-oxoglutarate + NH4(+) + NADH + H(+). The catalysed reaction is L-glutamate + NADP(+) + H2O = 2-oxoglutarate + NH4(+) + NADPH + H(+). The polypeptide is Glutamate dehydrogenase (GDH1) (Solanum lycopersicum (Tomato)).